The sequence spans 122 residues: Large ribosomal subunit protein uL14 (122 aa).

Belongs to the universal ribosomal protein uL14 family. As to quaternary structure, part of the 50S ribosomal subunit. Forms a cluster with proteins L3 and L19. In the 70S ribosome, L14 and L19 interact and together make contacts with the 16S rRNA in bridges B5 and B8.

Binds to 23S rRNA. Forms part of two intersubunit bridges in the 70S ribosome. The sequence is that of Large ribosomal subunit protein uL14 from Shewanella amazonensis (strain ATCC BAA-1098 / SB2B).